A 202-amino-acid chain; its full sequence is uncharacterized protein (202 aa).

Residues 164 to 202 (DTDSEQESDQESDQDSDQESEESDQESDQDSDQDSEGSE) form a disordered region. The segment covering 165-202 (TDSEQESDQESDQDSDQESEESDQESDQDSDQDSEGSE) has biased composition (acidic residues).

This is an uncharacterized protein from Acanthamoeba polyphaga mimivirus (APMV).